Consider the following 355-residue polypeptide: tRNA uridine(34) hydroxylase (355 aa).

Residues aspartate 146–leucine 240 form the Rhodanese domain. Cysteine 200 functions as the Cysteine persulfide intermediate in the catalytic mechanism.

The protein belongs to the TrhO family.

The catalysed reaction is uridine(34) in tRNA + AH2 + O2 = 5-hydroxyuridine(34) in tRNA + A + H2O. In terms of biological role, catalyzes oxygen-dependent 5-hydroxyuridine (ho5U) modification at position 34 in tRNAs. This is tRNA uridine(34) hydroxylase from Pectobacterium atrosepticum (strain SCRI 1043 / ATCC BAA-672) (Erwinia carotovora subsp. atroseptica).